Reading from the N-terminus, the 145-residue chain is Flagellar assembly factor FliW (145 aa).

It belongs to the FliW family. As to quaternary structure, interacts with translational regulator CsrA and flagellin(s).

Its subcellular location is the cytoplasm. Acts as an anti-CsrA protein, binds CsrA and prevents it from repressing translation of its target genes, one of which is flagellin. Binds to flagellin and participates in the assembly of the flagellum. The sequence is that of Flagellar assembly factor FliW from Anoxybacillus flavithermus (strain DSM 21510 / WK1).